The sequence spans 144 residues: Large ribosomal subunit protein uL15 (144 aa).

The span at 1 to 18 shows a compositional bias: basic and acidic residues; sequence MRLNDLHPAEGSRPEGKR. Positions 1-58 are disordered; sequence MRLNDLHPAEGSRPEGKRVGRGIGSGLGKTGGRGHKGQKSRSGGSVKPGFEGGQMPLQ. A compositionally biased stretch (gly residues) spans 21 to 31; that stretch reads RGIGSGLGKTG.

Belongs to the universal ribosomal protein uL15 family. Part of the 50S ribosomal subunit.

Its function is as follows. Binds to the 23S rRNA. In Alcanivorax borkumensis (strain ATCC 700651 / DSM 11573 / NCIMB 13689 / SK2), this protein is Large ribosomal subunit protein uL15.